A 413-amino-acid chain; its full sequence is uncharacterized protein (413 aa).

The protein belongs to the mycobacterial PPE family.

This is an uncharacterized protein from Mycobacterium tuberculosis (strain CDC 1551 / Oshkosh).